The following is a 65-amino-acid chain: Large ribosomal subunit protein bL35 (65 aa).

This sequence belongs to the bacterial ribosomal protein bL35 family.

This chain is Large ribosomal subunit protein bL35, found in Paraburkholderia phytofirmans (strain DSM 17436 / LMG 22146 / PsJN) (Burkholderia phytofirmans).